We begin with the raw amino-acid sequence, 1019 residues long: Probable LRR receptor-like serine/threonine-protein kinase At1g29720 (1019 aa).

An N-terminal signal peptide occupies residues Met1–Leu19. Topologically, residues Thr20 to Pro615 are extracellular. Residues Asn21, Asn79, and Asn90 are each glycosylated (N-linked (GlcNAc...) asparagine). LRR repeat units lie at residues Ile93–Leu117, Pro118–Met141, Tyr143–Phe165, Lys166–Leu189, Thr190–Arg212, Val214–Asn236, Trp237–Leu261, Asn263–Ser283, Lys284–Leu307, Thr308–Pro330, Lys332–Leu351, Asn352–Ser374, and Thr375–Ala398. 3 N-linked (GlcNAc...) asparagine glycosylation sites follow: Asn153, Asn167, and Asn188. N-linked (GlcNAc...) asparagine glycans are attached at residues Asn225 and Asn236. 2 N-linked (GlcNAc...) asparagine glycosylation sites follow: Asn280 and Asn306. N-linked (GlcNAc...) asparagine glycans are attached at residues Asn363, Asn387, Asn469, and Asn558. The helical transmembrane segment at Leu616–Ala636 threads the bilayer. The Cytoplasmic portion of the chain corresponds to Arg637–Leu1019. The region spanning Phe673 to Ile946 is the Protein kinase domain. Residues Leu679 to Val687 and Lys701 contribute to the ATP site. Tyr746 is modified (phosphotyrosine). The active-site Proton acceptor is Asp797. Ser830 carries the post-translational modification Phosphoserine. 2 positions are modified to phosphothreonine: Thr831 and Thr836. A Phosphotyrosine modification is found at Tyr844.

This sequence belongs to the protein kinase superfamily. Ser/Thr protein kinase family.

Its subcellular location is the cell membrane. The catalysed reaction is L-seryl-[protein] + ATP = O-phospho-L-seryl-[protein] + ADP + H(+). The enzyme catalyses L-threonyl-[protein] + ATP = O-phospho-L-threonyl-[protein] + ADP + H(+). This is Probable LRR receptor-like serine/threonine-protein kinase At1g29720 (RFK1) from Arabidopsis thaliana (Mouse-ear cress).